The primary structure comprises 460 residues: Bifunctional protein GlmU (460 aa).

Residues 1-229 (MTNYAIILAA…FNESLGVNDR (229 aa)) are pyrophosphorylase. UDP-N-acetyl-alpha-D-glucosamine-binding positions include 8–11 (LAAG), K22, Q72, and 77–78 (GT). Residue D102 participates in Mg(2+) binding. UDP-N-acetyl-alpha-D-glucosamine is bound by residues G139, E154, N169, and N227. A Mg(2+)-binding site is contributed by N227. The interval 230–250 (VALATAETVMRQRITQKHMVN) is linker. Positions 251 to 460 (GVTFQNPETV…RLAHHPSRSK (210 aa)) are N-acetyltransferase. UDP-N-acetyl-alpha-D-glucosamine contacts are provided by R332 and K350. H362 functions as the Proton acceptor in the catalytic mechanism. The UDP-N-acetyl-alpha-D-glucosamine site is built by Y365 and N376. Residues A379, 385-386 (NY), S404, A422, and R439 contribute to the acetyl-CoA site.

This sequence in the N-terminal section; belongs to the N-acetylglucosamine-1-phosphate uridyltransferase family. It in the C-terminal section; belongs to the transferase hexapeptide repeat family. Homotrimer. The cofactor is Mg(2+).

It localises to the cytoplasm. It carries out the reaction alpha-D-glucosamine 1-phosphate + acetyl-CoA = N-acetyl-alpha-D-glucosamine 1-phosphate + CoA + H(+). The catalysed reaction is N-acetyl-alpha-D-glucosamine 1-phosphate + UTP + H(+) = UDP-N-acetyl-alpha-D-glucosamine + diphosphate. It participates in nucleotide-sugar biosynthesis; UDP-N-acetyl-alpha-D-glucosamine biosynthesis; N-acetyl-alpha-D-glucosamine 1-phosphate from alpha-D-glucosamine 6-phosphate (route II): step 2/2. Its pathway is nucleotide-sugar biosynthesis; UDP-N-acetyl-alpha-D-glucosamine biosynthesis; UDP-N-acetyl-alpha-D-glucosamine from N-acetyl-alpha-D-glucosamine 1-phosphate: step 1/1. The protein operates within bacterial outer membrane biogenesis; LPS lipid A biosynthesis. Catalyzes the last two sequential reactions in the de novo biosynthetic pathway for UDP-N-acetylglucosamine (UDP-GlcNAc). The C-terminal domain catalyzes the transfer of acetyl group from acetyl coenzyme A to glucosamine-1-phosphate (GlcN-1-P) to produce N-acetylglucosamine-1-phosphate (GlcNAc-1-P), which is converted into UDP-GlcNAc by the transfer of uridine 5-monophosphate (from uridine 5-triphosphate), a reaction catalyzed by the N-terminal domain. This chain is Bifunctional protein GlmU, found in Streptococcus pyogenes serotype M6 (strain ATCC BAA-946 / MGAS10394).